We begin with the raw amino-acid sequence, 95 residues long: Small ribosomal subunit protein bS6 (95 aa).

This sequence belongs to the bacterial ribosomal protein bS6 family.

Binds together with bS18 to 16S ribosomal RNA. The sequence is that of Small ribosomal subunit protein bS6 from Bacillus velezensis (strain DSM 23117 / BGSC 10A6 / LMG 26770 / FZB42) (Bacillus amyloliquefaciens subsp. plantarum).